Consider the following 623-residue polypeptide: Transketolase (623 aa).

M1 is modified (N-acetylmethionine). N6-acetyllysine is present on residues K6 and K11. H37 is a substrate binding site. Residues S40 and H77 each coordinate thiamine diphosphate. S104 is subject to Phosphoserine. 123-125 (GSL) provides a ligand contact to thiamine diphosphate. K144 is modified (N6-acetyllysine). Position 155 (D155) interacts with Mg(2+). Thiamine diphosphate is bound by residues G156 and N185. 2 residues coordinate Mg(2+): N185 and L187. 3 positions are modified to N6-acetyllysine: K204, K232, and K241. Thiamine diphosphate-binding residues include K244 and H258. Substrate is bound at residue H258. N6-acetyllysine is present on K260. Phosphotyrosine is present on Y275. T287 is subject to Phosphothreonine. Position 295 is a phosphoserine (S295). Position 318 (R318) interacts with substrate. K352 participates in a covalent cross-link: Glycyl lysine isopeptide (Lys-Gly) (interchain with G-Cter in SUMO2). E366 functions as the Proton donor in the catalytic mechanism. F392 provides a ligand contact to thiamine diphosphate. Substrate is bound by residues H416 and D424. Q428 lines the thiamine diphosphate pocket. R474 contributes to the substrate binding site. K538 and K603 each carry N6-acetyllysine.

It belongs to the transketolase family. In terms of assembly, homodimer. The cofactor is Mg(2+). Ca(2+) serves as cofactor. Mn(2+) is required as a cofactor. It depends on Co(2+) as a cofactor. Requires thiamine diphosphate as cofactor.

The catalysed reaction is D-sedoheptulose 7-phosphate + D-glyceraldehyde 3-phosphate = aldehydo-D-ribose 5-phosphate + D-xylulose 5-phosphate. Functionally, catalyzes the transfer of a two-carbon ketol group from a ketose donor to an aldose acceptor, via a covalent intermediate with the cofactor thiamine pyrophosphate. This chain is Transketolase (TKT), found in Pongo abelii (Sumatran orangutan).